The following is a 209-amino-acid chain: Putative cardiolipin synthase (209 aa).

Helical transmembrane passes span 27 to 47 (AFVY…ILVF), 82 to 102 (VTVP…VLTL), 126 to 146 (VTYV…TILL), and 157 to 177 (LLAC…WAFV).

The protein belongs to the CDP-alcohol phosphatidyltransferase class-I family.

The protein resides in the cell membrane. It catalyses the reaction a CDP-1,2-diacyl-sn-glycerol + a 1,2-diacyl-sn-glycero-3-phospho-(1'-sn-glycerol) = a cardiolipin + CMP + H(+). It participates in lipid metabolism; phospholipid metabolism. Its function is as follows. May catalyze the biosynthesis of cardiolipin from phosphatidylglycerol (PG) and CDP-diacylglycerol. The chain is Putative cardiolipin synthase from Mycobacterium bovis (strain ATCC BAA-935 / AF2122/97).